The sequence spans 142 residues: Two-component response regulator ARR22 (142 aa).

The 118-residue stretch at 23 to 140 (NVLIVDDDPL…KIFPLISHLF (118 aa)) folds into the Response regulatory domain. Aspartate 74 carries the 4-aspartylphosphate modification.

The protein belongs to the ARR family. Type-A subfamily. Post-translationally, two-component system major event consists of a His-to-Asp phosphorelay between a sensor histidine kinase (HK) and a response regulator (RR). In plants, the His-to-Asp phosphorelay involves an additional intermediate named Histidine-containing phosphotransfer protein (HPt). This multistep phosphorelay consists of a His-Asp-His-Asp sequential transfer of a phosphate group between first a His and an Asp of the HK protein, followed by the transfer to a conserved His of the HPt protein and finally the transfer to an Asp in the receiver domain of the RR protein.

Its subcellular location is the nucleus. Functions as a response regulator involved in His-to-Asp phosphorelay signal transduction system. Phosphorylation of the Asp residue in the receiver domain activates the ability of the protein to promote the transcription of target genes. Type-A response regulators seem to act as negative regulators of the cytokinin signaling. The protein is Two-component response regulator ARR22 (ARR22) of Arabidopsis thaliana (Mouse-ear cress).